The primary structure comprises 311 residues: Methionyl-tRNA formyltransferase (311 aa).

109-112 (SLLP) contributes to the (6S)-5,6,7,8-tetrahydrofolate binding site.

It belongs to the Fmt family.

The enzyme catalyses L-methionyl-tRNA(fMet) + (6R)-10-formyltetrahydrofolate = N-formyl-L-methionyl-tRNA(fMet) + (6S)-5,6,7,8-tetrahydrofolate + H(+). In terms of biological role, attaches a formyl group to the free amino group of methionyl-tRNA(fMet). The formyl group appears to play a dual role in the initiator identity of N-formylmethionyl-tRNA by promoting its recognition by IF2 and preventing the misappropriation of this tRNA by the elongation apparatus. In Marinobacter nauticus (strain ATCC 700491 / DSM 11845 / VT8) (Marinobacter aquaeolei), this protein is Methionyl-tRNA formyltransferase.